A 530-amino-acid polypeptide reads, in one-letter code: Glucose-6-phosphate isomerase (530 aa).

The Proton donor role is filled by glutamate 335. Active-site residues include histidine 366 and lysine 495.

It belongs to the GPI family.

It localises to the cytoplasm. The catalysed reaction is alpha-D-glucose 6-phosphate = beta-D-fructose 6-phosphate. It participates in carbohydrate biosynthesis; gluconeogenesis. The protein operates within carbohydrate degradation; glycolysis; D-glyceraldehyde 3-phosphate and glycerone phosphate from D-glucose: step 2/4. Catalyzes the reversible isomerization of glucose-6-phosphate to fructose-6-phosphate. This chain is Glucose-6-phosphate isomerase, found in Roseobacter denitrificans (strain ATCC 33942 / OCh 114) (Erythrobacter sp. (strain OCh 114)).